A 1372-amino-acid polypeptide reads, in one-letter code: DNA-directed RNA polymerase subunit beta (1372 aa).

The protein belongs to the RNA polymerase beta chain family. As to quaternary structure, the RNAP catalytic core consists of 2 alpha, 1 beta, 1 beta' and 1 omega subunit. When a sigma factor is associated with the core the holoenzyme is formed, which can initiate transcription.

It catalyses the reaction RNA(n) + a ribonucleoside 5'-triphosphate = RNA(n+1) + diphosphate. DNA-dependent RNA polymerase catalyzes the transcription of DNA into RNA using the four ribonucleoside triphosphates as substrates. This chain is DNA-directed RNA polymerase subunit beta, found in Bradyrhizobium diazoefficiens (strain JCM 10833 / BCRC 13528 / IAM 13628 / NBRC 14792 / USDA 110).